Reading from the N-terminus, the 212-residue chain is MRVVVIDYNGGNLASAAQAARKAATRKGIEADVVISRDATDILNADRLILPGQGAFADCAQGLGPALRNMLETATANGTPFLGICVGMQLMCEYGLEHGRTEGLGWISGNIRRMDEAANASLRLPHMGWNTLDFTPGAHLLTDGLIPGNHGYFVHSYALHDGADSDLVATAQYGTQVPAIVARGNRCGTQFHVEKSQDVGLTILGNFLRWTS.

Residues 2–212 (RVVVIDYNGG…ILGNFLRWTS (211 aa)) form the Glutamine amidotransferase type-1 domain. Cys85 serves as the catalytic Nucleophile. Catalysis depends on residues His192 and Glu194.

In terms of assembly, heterodimer of HisH and HisF.

It is found in the cytoplasm. It catalyses the reaction 5-[(5-phospho-1-deoxy-D-ribulos-1-ylimino)methylamino]-1-(5-phospho-beta-D-ribosyl)imidazole-4-carboxamide + L-glutamine = D-erythro-1-(imidazol-4-yl)glycerol 3-phosphate + 5-amino-1-(5-phospho-beta-D-ribosyl)imidazole-4-carboxamide + L-glutamate + H(+). The enzyme catalyses L-glutamine + H2O = L-glutamate + NH4(+). It functions in the pathway amino-acid biosynthesis; L-histidine biosynthesis; L-histidine from 5-phospho-alpha-D-ribose 1-diphosphate: step 5/9. Functionally, IGPS catalyzes the conversion of PRFAR and glutamine to IGP, AICAR and glutamate. The HisH subunit catalyzes the hydrolysis of glutamine to glutamate and ammonia as part of the synthesis of IGP and AICAR. The resulting ammonia molecule is channeled to the active site of HisF. This Gluconobacter oxydans (strain 621H) (Gluconobacter suboxydans) protein is Imidazole glycerol phosphate synthase subunit HisH.